The primary structure comprises 337 residues: 4-hydroxythreonine-4-phosphate dehydrogenase (337 aa).

Residues His138 and Thr139 each coordinate substrate. The a divalent metal cation site is built by His168, His212, and His267. Residues Lys275, Asn284, and Arg293 each coordinate substrate.

Belongs to the PdxA family. Homodimer. Zn(2+) is required as a cofactor. Mg(2+) serves as cofactor. The cofactor is Co(2+).

Its subcellular location is the cytoplasm. It catalyses the reaction 4-(phosphooxy)-L-threonine + NAD(+) = 3-amino-2-oxopropyl phosphate + CO2 + NADH. It functions in the pathway cofactor biosynthesis; pyridoxine 5'-phosphate biosynthesis; pyridoxine 5'-phosphate from D-erythrose 4-phosphate: step 4/5. Functionally, catalyzes the NAD(P)-dependent oxidation of 4-(phosphooxy)-L-threonine (HTP) into 2-amino-3-oxo-4-(phosphooxy)butyric acid which spontaneously decarboxylates to form 3-amino-2-oxopropyl phosphate (AHAP). This is 4-hydroxythreonine-4-phosphate dehydrogenase from Beijerinckia indica subsp. indica (strain ATCC 9039 / DSM 1715 / NCIMB 8712).